The primary structure comprises 67 residues: Conotoxin VnMMSK-02 (67 aa).

An N-terminal signal peptide occupies residues 1–20 (MMSKLGALLTICLLLFPLTA). The propeptide occupies 21 to 52 (LPLDGDQPADRPAERMQDDISSEQHPLFDKER). A Pyrrolidone carboxylic acid modification is found at Gln-53. Intrachain disulfides connect Cys-54/Cys-66, Cys-55/Cys-62, and Cys-59/Cys-65. Pro-64 carries the post-translational modification 4-hydroxyproline. The residue at position 66 (Cys-66) is a Cysteine amide.

The protein belongs to the conotoxin M superfamily. As to expression, expressed by the venom duct.

It is found in the secreted. The sequence is that of Conotoxin VnMMSK-02 from Conus ventricosus (Mediterranean cone).